The sequence spans 100 residues: Small ribosomal subunit protein uS14c (100 aa).

Belongs to the universal ribosomal protein uS14 family. As to quaternary structure, part of the 30S ribosomal subunit.

It is found in the plastid. Its subcellular location is the chloroplast. Binds 16S rRNA, required for the assembly of 30S particles. The protein is Small ribosomal subunit protein uS14c of Lactuca sativa (Garden lettuce).